A 203-amino-acid chain; its full sequence is NNYCKICPKGTHTLCKYGTSMKPNCGGKIVKSYGVTNDEKNEIVKRHNEFRQKVAQGLETRGNPGPQPPAKNMNLLVWNDELAKIAQTWANQCNFGHDQCRNTAKYPVGQNVAIASTTGNSYQTMSYLIKMWEDEVKDYNPHKDLMHNNFSKVGHYTQMVWGKTKEIGCGSVKYIENKWHTHYLVCNYGPAGNYMNQPVYERK.

4 cysteine pairs are disulfide-bonded: C4/C15, C7/C100, C25/C93, and C169/C186. Residues 45–188 (KRHNEFRQKV…WHTHYLVCNY (144 aa)) enclose the SCP domain.

Belongs to the CRISP family. Venom allergen 5-like subfamily. Expressed by the venom gland.

The protein resides in the secreted. The polypeptide is Venom allergen 5 (Dolichovespula arenaria (Yellow hornet)).